The primary structure comprises 73 residues: Putative antimicrobial peptide clone 5 (73 aa).

The signal sequence occupies residues 1 to 22; that stretch reads MQIKHLITLFFLVLIGADQCSA. A propeptide spanning residues 45–73 is cleaved from the precursor; it reads EVSPQIDQYRNFQKREAELEELLDRLPMY.

This sequence belongs to the non-disulfide-bridged peptide (NDBP) superfamily. Short antimicrobial peptide (group 4) family. As to expression, expressed by the venom gland.

The protein resides in the secreted. Its function is as follows. Antibacterial peptide. The polypeptide is Putative antimicrobial peptide clone 5 (Tityus costatus (Brazilian scorpion)).